Here is a 127-residue protein sequence, read N- to C-terminus: Major sperm protein 55/57 (127 aa).

The residue at position 2 (A2) is an N-acetylalanine. An MSP domain is found at 9 to 126; the sequence is DIQTQPGTKI…RRKNLPIEYN (118 aa).

In terms of tissue distribution, sperm.

It is found in the cell projection. It localises to the pseudopodium. The protein resides in the cytoplasm. Its subcellular location is the cytoskeleton. Its function is as follows. Central component in molecular interactions underlying sperm crawling. Forms an extensive filament system that extends from sperm villipoda, along the leading edge of the pseudopod. This chain is Major sperm protein 55/57 (msp-55), found in Caenorhabditis elegans.